A 305-amino-acid chain; its full sequence is Tetraspanin-12 (305 aa).

The Cytoplasmic portion of the chain corresponds to 1–12 (MAREDSVKCLRC). S-palmitoyl cysteine attachment occurs at residues C9 and C12. Residues 13–33 (LLYALNLLFWLMSISVLAVSA) traverse the membrane as a helical segment. At 34–59 (WMRDYLNNVLTLTAETRVEEAVILTY) the chain is on the extracellular side. Residues 60–80 (FPVVHPVMIAVCCFLIIVGML) form a helical membrane-spanning segment. Over 81–89 (GYCGTVKRN) the chain is Cytoplasmic. C83 is lipidated: S-palmitoyl cysteine. The chain crosses the membrane as a helical span at residues 90–110 (LLLLAWYFGSLLVIFCVELAC). The Extracellular segment spans residues 111–224 (GVWTYEQEIM…RGTKQLQVLR (114 aa)). A helical membrane pass occupies residues 225–245 (FLGISIGVTQILAMILTITLL). Residues 246 to 305 (WALYYDRREPGTDQMMALKNDTTQHLPCHSVELLKPSLSRIFEHTSMANSFNTHFEMEEL) are Cytoplasmic-facing.

The protein belongs to the tetraspanin (TM4SF) family. In terms of assembly, component of a complex, at least composed of TSPAN12, FZD4 and norrin (NDP). Interacts (when palmitoylated) with ADAM10. Interacts with MMP14/MT1-MMP. Palmitoylated; required for interaction with ADAM10. The precise position of palmitoylated residues is unclear and occurs either on Cys-9, Cys-12 and/or Cys-83.

It is found in the cell membrane. Regulator of cell surface receptor signal transduction. Plays a central role in retinal vascularization by regulating norrin (NDP) signal transduction. Acts in concert with norrin (NDP) to promote FZD4 multimerization and subsequent activation of FZD4, leading to promote accumulation of beta-catenin (CTNNB1) and stimulate LEF/TCF-mediated transcriptional programs. Suprisingly, it only activates the norrin (NDP)-dependent activation of FZD4, while it does not activate the Wnt-dependent activation of FZD4, suggesting the existence of a Wnt-independent signaling that also promote accumulation the beta-catenin (CTNNB1). Acts as a regulator of membrane proteinases such as ADAM10 and MMP14/MT1-MMP. Activates ADAM10-dependent cleavage activity of amyloid precursor protein (APP). Activates MMP14/MT1-MMP-dependent cleavage activity. This is Tetraspanin-12 (TSPAN12) from Bos taurus (Bovine).